We begin with the raw amino-acid sequence, 193 residues long: Acyl carrier protein phosphodiesterase (193 aa).

This sequence belongs to the AcpH family.

It catalyses the reaction holo-[ACP] + H2O = apo-[ACP] + (R)-4'-phosphopantetheine + H(+). Functionally, converts holo-ACP to apo-ACP by hydrolytic cleavage of the phosphopantetheine prosthetic group from ACP. The sequence is that of Acyl carrier protein phosphodiesterase from Yersinia pestis.